The chain runs to 363 residues: MKRIVLLLMSVALFSTAAQAARIKDVAQVAGVRSNQLVGYGLVSGLPGTGEANPFTEQSFAAMLQNFGIQLPPGTKPKIKNVAAVMVTAELPPFSKPGQQVDVTVSSIGSAKSLRGGTLLQTFLKGLDGQVYAVAQGNLVVSGFSAEGADGSKIVGNNPTVGLISSGATVEREIPNPFGRGDYITFNLLESDFTTAQRMADAVNNFLGPQMASAVDATSVRVRAPRDVSQRVAFLSAIENLEFDPADGAAKIIVNSRTGTIVVGKHVRLKPAAVTHGGMTVAIKENLNVSQPNSFSGGQTVVVPDSDIEVTEEKGKMFKFEPGLTLDDLVRAVNEVGAAPSDLMAILQALKQAGAIEGQLIII.

The N-terminal stretch at 1-20 is a signal peptide; the sequence is MKRIVLLLMSVALFSTAAQA.

This sequence belongs to the FlgI family. The basal body constitutes a major portion of the flagellar organelle and consists of four rings (L,P,S, and M) mounted on a central rod.

Its subcellular location is the periplasm. The protein resides in the bacterial flagellum basal body. Functionally, assembles around the rod to form the L-ring and probably protects the motor/basal body from shearing forces during rotation. The chain is Flagellar P-ring protein 2 (flgI2) from Vibrio parahaemolyticus serotype O3:K6 (strain RIMD 2210633).